The primary structure comprises 253 residues: Allene oxide cyclase 2, chloroplastic (253 aa).

The transit peptide at 1 to 77 (MASSAVSLQS…SQNGNIENPR (77 aa)) directs the protein to the chloroplast.

The protein belongs to the allene oxide cyclase family. In terms of tissue distribution, highly expressed in fully developed leaves.

Its subcellular location is the plastid. It is found in the chloroplast. The enzyme catalyses (9Z,13S,15Z)-12,13-epoxyoctadeca-9,11,15-trienoate = (9S,13S,15Z)-12-oxophyto-10,15-dienoate. Involved in the production of 12-oxo-phytodienoic acid (OPDA), a precursor of jasmonic acid. The sequence is that of Allene oxide cyclase 2, chloroplastic (AOC2) from Arabidopsis thaliana (Mouse-ear cress).